Consider the following 93-residue polypeptide: uncharacterized protein (93 aa).

Positions 1 to 11 (MALMVLMALVG) are cleaved as a signal peptide. C12 is lipidated: N-palmitoyl cysteine. The S-diacylglycerol cysteine moiety is linked to residue C12.

The protein localises to the cell membrane. This is an uncharacterized protein from Escherichia coli O6:K15:H31 (strain 536 / UPEC).